Here is a 421-residue protein sequence, read N- to C-terminus: Peptide chain release factor subunit 1 (421 aa).

The protein belongs to the eukaryotic release factor 1 family. Heterodimer of two subunits, one of which binds GTP.

Its subcellular location is the cytoplasm. In terms of biological role, directs the termination of nascent peptide synthesis (translation) in response to the termination codons UAA, UAG and UGA. The polypeptide is Peptide chain release factor subunit 1 (prf1) (Methanocaldococcus jannaschii (strain ATCC 43067 / DSM 2661 / JAL-1 / JCM 10045 / NBRC 100440) (Methanococcus jannaschii)).